A 163-amino-acid chain; its full sequence is Transcription elongation factor GreB (163 aa).

Residues 54-76 (GKRRMREIDRRIRFLTKRLEAAV) are a coiled coil.

It belongs to the GreA/GreB family. GreB subfamily.

Functionally, necessary for efficient RNA polymerase transcription elongation past template-encoded arresting sites. The arresting sites in DNA have the property of trapping a certain fraction of elongating RNA polymerases that pass through, resulting in locked ternary complexes. Cleavage of the nascent transcript by cleavage factors such as GreA or GreB allows the resumption of elongation from the new 3'terminus. GreB releases sequences of up to 9 nucleotides in length. The protein is Transcription elongation factor GreB of Neisseria meningitidis serogroup A / serotype 4A (strain DSM 15465 / Z2491).